The primary structure comprises 79 residues: Sec-independent protein translocase protein TatA (79 aa).

Residues Met1 to Phe21 form a helical membrane-spanning segment. Residues Asp46–Ser79 are disordered. The span at Lys66–Ser79 shows a compositional bias: basic and acidic residues.

The protein belongs to the TatA/E family. The Tat system comprises two distinct complexes: a TatABC complex, containing multiple copies of TatA, TatB and TatC subunits, and a separate TatA complex, containing only TatA subunits. Substrates initially bind to the TatABC complex, which probably triggers association of the separate TatA complex to form the active translocon.

Its subcellular location is the cell inner membrane. Its function is as follows. Part of the twin-arginine translocation (Tat) system that transports large folded proteins containing a characteristic twin-arginine motif in their signal peptide across membranes. TatA could form the protein-conducting channel of the Tat system. The protein is Sec-independent protein translocase protein TatA of Helicobacter pylori (strain HPAG1).